A 210-amino-acid chain; its full sequence is Cell division protein SepF (210 aa).

Composition is skewed to low complexity over residues 36-47 (QQQQTPAAVPTQ) and 59-69 (RASATTATTAS). Disordered regions lie at residues 36–69 (QQQQTPAAVPTQEESRSNRRLRNRASATTATTAS) and 182–210 (NEMSQTQPRPRVPNSGSQVWQPEQIQMIQ).

It belongs to the SepF family. As to quaternary structure, homodimer. Interacts with FtsZ.

It localises to the cytoplasm. In terms of biological role, cell division protein that is part of the divisome complex and is recruited early to the Z-ring. Probably stimulates Z-ring formation, perhaps through the cross-linking of FtsZ protofilaments. Its function overlaps with FtsA. The polypeptide is Cell division protein SepF (Trichodesmium erythraeum (strain IMS101)).